The following is a 638-amino-acid chain: MAALAGEEAWRCRGCGNYVPLSQRLYRTANEAWHSSCFRCSECQESLTNWYYEKDGKLYCHKDYWAKFGEFCHGCSLLMTGPAMVAGEFKYHPECFACMSCKVIIEDGDAYALVQHATLYCGKCHNEVVLAPMFERLSTESVQDQLPYSVTLISMPATTECRRGFSVSVESASSNYATTVQVKEVNRMHISPNNRNAIHPGDRILEINGTPVRTLRVEEVEDAINQTSQTLQLLIEHDPVPQRLDQLRLDTRLSPHMQSSGHTLMLSTLDAKENQEGTLRRRSLRRSNSISKSPGPSSPKEPLLLSRDISRSESLRCSSSYSQQIFRPCDLIHGEVLGKGFFGQAIKVTHKATGKVMVMKELIRCDEETQKTFLTEVKVMRSLDHPNVLKFIGVLYKDKKLNLLTEYIEGGTLKDFLRNVDPFPWQQKVRFAKGIASGMAYLHSMCIIHRDLNSHNCLIKLDKTVVVADFGLSRLIVEERKRPPVEKAATKKRTLRKSDRKKRYTVVGNPYWMAPEMLNGKSYDETVDVFSFGIVLCEIIGQVYADPDCLPRTLDFGLNVKLFWEKFVPTDCPPAFFPLAAICCKLEPESRPAFSKLEDSFEALSLFLGELAIPLPAELEELDHTVSMEYGLTRDSPP.

LIM zinc-binding domains follow at residues 12 to 63 (CRGC…CHKD) and 72 to 124 (CHGC…CGKC). Positions 152–239 (LISMPATTEC…TLQLLIEHDP (88 aa)) constitute a PDZ domain. At Thr210 the chain carries Phosphothreonine. A compositionally biased stretch (polar residues) spans 257–266 (MQSSGHTLML). Positions 257–304 (MQSSGHTLMLSTLDAKENQEGTLRRRSLRRSNSISKSPGPSSPKEPLL) are disordered. Over residues 270–279 (DAKENQEGTL) the composition is skewed to basic and acidic residues. Over residues 286–304 (RSNSISKSPGPSSPKEPLL) the composition is skewed to low complexity. 2 positions are modified to phosphoserine: Ser293 and Ser298. The region spanning 331 to 608 (LIHGEVLGKG…DSFEALSLFL (278 aa)) is the Protein kinase domain. Residues 337-345 (LGKGFFGQA) and Lys360 contribute to the ATP site. Asp451 is a catalytic residue. A Phosphothreonine; by ROCK1 and CDC42BP modification is found at Thr505.

The protein belongs to the protein kinase superfamily. TKL Ser/Thr protein kinase family. As to quaternary structure, binds ROCK1 and MARF1. Interacts with NISCH. Post-translationally, phosphorylated on serine and/or threonine residues by ROCK1. As to expression, found in various tissues at moderate levels, except for testis, which shows very low expression.

The protein localises to the cytoplasm. It localises to the nucleus. It is found in the perinuclear region. The protein resides in the cytoskeleton. Its subcellular location is the spindle. The protein localises to the microtubule organizing center. It localises to the centrosome. It carries out the reaction L-seryl-[protein] + ATP = O-phospho-L-seryl-[protein] + ADP + H(+). It catalyses the reaction L-threonyl-[protein] + ATP = O-phospho-L-threonyl-[protein] + ADP + H(+). Its function is as follows. Serine/threonine-protein kinase that plays an essential role in the regulation of actin filament dynamics. Acts downstream of several Rho family GTPase signal transduction pathways. Involved in astral microtubule organization and mitotic spindle orientation during early stages of mitosis by mediating phosphorylation of TPPP. Displays serine/threonine-specific phosphorylation of myelin basic protein and histone (MBP) in vitro. Suppresses ciliogenesis via multiple pathways; phosphorylation of CFL1, directional trafficking of ciliary vesicles to the ciliary base, and by facilitating YAP1 nuclear localization where it acts as a transcriptional corepressor of the TEAD4 target genes AURKA and PLK1. The polypeptide is LIM domain kinase 2 (Limk2) (Rattus norvegicus (Rat)).